The chain runs to 215 residues: uncharacterized protein (215 aa).

It belongs to the thiaminase-2 family.

This is an uncharacterized protein from Haemophilus influenzae (strain ATCC 51907 / DSM 11121 / KW20 / Rd).